The chain runs to 928 residues: DENN domain-containing protein 2C (928 aa).

Disordered regions lie at residues 67–105 (KSKN…YDDT) and 245–266 (QSSL…IRGR). Residues 85 to 105 (ENTKSHDQSENENKKHEYDDT) are compositionally biased toward basic and acidic residues. A Phosphoserine modification is found at S271. Residues 428 to 456 (KLHSYTGKELPPTKGETSGNESDAEYLPK) are disordered. Positions 492-641 (ELFVVVSLQK…PFPAPGRTIT (150 aa)) constitute a uDENN domain. In terms of domain architecture, cDENN spans 663-796 (RLEHVDFKCL…LQAALMQILE (134 aa)). Positions 798-888 (RNEILTQEQN…QDRELRKSGV (91 aa)) constitute a dDENN domain.

Its function is as follows. Guanine nucleotide exchange factor (GEF) which may activate RAB9A and RAB9B. Promotes the exchange of GDP to GTP, converting inactive GDP-bound Rab proteins into their active GTP-bound form. This is DENN domain-containing protein 2C (DENND2C) from Homo sapiens (Human).